We begin with the raw amino-acid sequence, 369 residues long: tRNA-specific 2-thiouridylase MnmA (369 aa).

ATP is bound by residues 7-14 (GISGGVDS) and Met-33. The interaction with target base in tRNA stretch occupies residues 93 to 95 (NPD). Cys-98 serves as the catalytic Nucleophile. Cys-98 and Cys-195 form a disulfide bridge. Gly-123 provides a ligand contact to ATP. Positions 145–147 (KDQ) are interaction with tRNA. Cys-195 functions as the Cysteine persulfide intermediate in the catalytic mechanism. The interaction with tRNA stretch occupies residues 307–308 (RY).

It belongs to the MnmA/TRMU family. Interacts with TusE.

It is found in the cytoplasm. The catalysed reaction is S-sulfanyl-L-cysteinyl-[protein] + uridine(34) in tRNA + AH2 + ATP = 2-thiouridine(34) in tRNA + L-cysteinyl-[protein] + A + AMP + diphosphate + H(+). In terms of biological role, catalyzes the 2-thiolation of uridine at the wobble position (U34) of tRNA(Lys), tRNA(Glu) and tRNA(Gln), leading to the formation of s(2)U34, the first step of tRNA-mnm(5)s(2)U34 synthesis. Sulfur is provided by IscS, via a sulfur-relay system. Binds ATP and its substrate tRNAs. This chain is tRNA-specific 2-thiouridylase MnmA, found in Blochmanniella floridana.